Here is a 154-residue protein sequence, read N- to C-terminus: Deoxyuridine 5'-triphosphate nucleotidohydrolase (154 aa).

Residues 72-74, N85, 89-91, and M99 contribute to the substrate site; these read RSG and LID.

The protein belongs to the dUTPase family. The cofactor is Mg(2+).

It carries out the reaction dUTP + H2O = dUMP + diphosphate + H(+). Its pathway is pyrimidine metabolism; dUMP biosynthesis; dUMP from dCTP (dUTP route): step 2/2. Functionally, this enzyme is involved in nucleotide metabolism: it produces dUMP, the immediate precursor of thymidine nucleotides and it decreases the intracellular concentration of dUTP so that uracil cannot be incorporated into DNA. This is Deoxyuridine 5'-triphosphate nucleotidohydrolase from Psychrobacter sp. (strain PRwf-1).